The chain runs to 362 residues: MEHNGTAALGWAARDTSGHLSPFSFTRRVQQEDDVTIKVLYCGICHTDLHIIKNEWGNAMYPVVPGHEIVGVVTGVGAGVTKFKAGDTVGVGYFVDSCRACDSCGKGYENYCPTMVITSNGTDYGGATTQGGFSDVMVVRQDYVVRVPASLPPDGAAPLLCAGVTVYSPMVEYGLNGPGKHLGVVGLGGLGHLGVKFGKAFGMKVTVISSSPAKRGEALGRLGADAFLSSRDGEGMAAAAATMDGIIDTVSAGHPLVPLLSLLKPKGQMVVVGAPAMPLQLPAYAIIEGGKRVAGNGVGSVAECQAMLDFAGEHGIAADVEVVAMDAVNAALGRLERNDVRYRFVVDVAGTMHAAAAAAASS.

C45 is a binding site for Zn(2+). T47 is an NADP(+) binding site. H67, E68, C98, C101, C104, C112, and C161 together coordinate Zn(2+). Residues T165, 186 to 191 (GLGGLG), 209 to 214 (SSSPAK), T249, G273, and 296 to 298 (NGV) contribute to the NADP(+) site.

It belongs to the zinc-containing alcohol dehydrogenase family. As to quaternary structure, homodimer. The cofactor is Zn(2+).

The enzyme catalyses (E)-cinnamyl alcohol + NADP(+) = (E)-cinnamaldehyde + NADPH + H(+). The catalysed reaction is (E)-coniferol + NADP(+) = (E)-coniferaldehyde + NADPH + H(+). It carries out the reaction (E)-sinapyl alcohol + NADP(+) = (E)-sinapaldehyde + NADPH + H(+). It catalyses the reaction (E)-4-coumaroyl alcohol + NADP(+) = (E)-4-coumaraldehyde + NADPH + H(+). The enzyme catalyses (E)-caffeyl alcohol + NADP(+) = (E)-caffeyl aldehyde + NADPH + H(+). The protein operates within aromatic compound metabolism; phenylpropanoid biosynthesis. In terms of biological role, involved in lignin biosynthesis. Catalyzes the final step specific for the production of lignin monomers. Catalyzes the NADPH-dependent reduction of coniferaldehyde, 5-hydroxyconiferaldehyde, sinapaldehyde, 4-coumaraldehyde and caffeyl aldehyde to their respective alcohols. The protein is Probable cinnamyl alcohol dehydrogenase 8D of Oryza sativa subsp. japonica (Rice).